A 160-amino-acid polypeptide reads, in one-letter code: 2-C-methyl-D-erythritol 2,4-cyclodiphosphate synthase (160 aa).

A divalent metal cation is bound by residues Asp-10 and His-12. Residues 10-12 and 36-37 each bind 4-CDP-2-C-methyl-D-erythritol 2-phosphate; these read DVH and HS. A divalent metal cation is bound at residue His-44. Residues 58-60, 134-137, Phe-141, and Arg-144 contribute to the 4-CDP-2-C-methyl-D-erythritol 2-phosphate site; these read DIG and TTTE.

This sequence belongs to the IspF family. As to quaternary structure, homotrimer. The cofactor is a divalent metal cation.

It catalyses the reaction 4-CDP-2-C-methyl-D-erythritol 2-phosphate = 2-C-methyl-D-erythritol 2,4-cyclic diphosphate + CMP. The protein operates within isoprenoid biosynthesis; isopentenyl diphosphate biosynthesis via DXP pathway; isopentenyl diphosphate from 1-deoxy-D-xylulose 5-phosphate: step 4/6. Its function is as follows. Involved in the biosynthesis of isopentenyl diphosphate (IPP) and dimethylallyl diphosphate (DMAPP), two major building blocks of isoprenoid compounds. Catalyzes the conversion of 4-diphosphocytidyl-2-C-methyl-D-erythritol 2-phosphate (CDP-ME2P) to 2-C-methyl-D-erythritol 2,4-cyclodiphosphate (ME-CPP) with a corresponding release of cytidine 5-monophosphate (CMP). The sequence is that of 2-C-methyl-D-erythritol 2,4-cyclodiphosphate synthase from Phocaeicola vulgatus (strain ATCC 8482 / DSM 1447 / JCM 5826 / CCUG 4940 / NBRC 14291 / NCTC 11154) (Bacteroides vulgatus).